We begin with the raw amino-acid sequence, 198 residues long: Nucleoside triphosphate pyrophosphatase (198 aa).

Aspartate 75 serves as the catalytic Proton acceptor.

It belongs to the Maf family. It depends on a divalent metal cation as a cofactor.

Its subcellular location is the cytoplasm. It catalyses the reaction a ribonucleoside 5'-triphosphate + H2O = a ribonucleoside 5'-phosphate + diphosphate + H(+). It carries out the reaction a 2'-deoxyribonucleoside 5'-triphosphate + H2O = a 2'-deoxyribonucleoside 5'-phosphate + diphosphate + H(+). Functionally, nucleoside triphosphate pyrophosphatase. May have a dual role in cell division arrest and in preventing the incorporation of modified nucleotides into cellular nucleic acids. The polypeptide is Nucleoside triphosphate pyrophosphatase (Hyphomonas neptunium (strain ATCC 15444)).